Consider the following 117-residue polypeptide: Immunoglobulin heavy variable 1-69 (117 aa).

An N-terminal signal peptide occupies residues 1–19; sequence MDWTWRFLFVVAAATGVQS. Glutamine 20 carries the pyrrolidone carboxylic acid modification. The framework-1 stretch occupies residues 20-44; that stretch reads QVQLVQSGAEVKKPGSSVKVSCKAS. Residues 20-117 form the Ig-like domain; the sequence is QVQLVQSGAE…EDTAVYYCAR (98 aa). The cysteines at positions 41 and 115 are disulfide-linked. The segment at 45-52 is complementarity-determining-1; that stretch reads GGTFSSYA. The tract at residues 53–69 is framework-2; that stretch reads ISWVRQAPGQGLEWMGG. The interval 70 to 77 is complementarity-determining-2; sequence IIPIFGTA. The tract at residues 78 to 115 is framework-3; it reads NYAQKFQGRVTITADKSTSTAYMELSSLRSEDTAVYYC. Positions 116-117 are complementarity-determining-3; that stretch reads AR.

Immunoglobulins are composed of two identical heavy chains and two identical light chains; disulfide-linked.

Its subcellular location is the secreted. The protein resides in the cell membrane. V region of the variable domain of immunoglobulin heavy chains that participates in the antigen recognition. Immunoglobulins, also known as antibodies, are membrane-bound or secreted glycoproteins produced by B lymphocytes. In the recognition phase of humoral immunity, the membrane-bound immunoglobulins serve as receptors which, upon binding of a specific antigen, trigger the clonal expansion and differentiation of B lymphocytes into immunoglobulins-secreting plasma cells. Secreted immunoglobulins mediate the effector phase of humoral immunity, which results in the elimination of bound antigens. The antigen binding site is formed by the variable domain of one heavy chain, together with that of its associated light chain. Thus, each immunoglobulin has two antigen binding sites with remarkable affinity for a particular antigen. The variable domains are assembled by a process called V-(D)-J rearrangement and can then be subjected to somatic hypermutations which, after exposure to antigen and selection, allow affinity maturation for a particular antigen. The polypeptide is Immunoglobulin heavy variable 1-69 (Homo sapiens (Human)).